Reading from the N-terminus, the 192-residue chain is MAMPDLTHDLTGKLLIAMPGMEDPRFAGAVIFLCVHSPGQAMGLIINKPMEEITFTELMEQLDIPKRGSTPQVPVCFGGPVDMRRGFVLHSPDYAPRGEEALRIDHRFAMTGTLDILEDIAAGRGPKRSLLALGYAGWGEGQLEAEIARNDWLTADATPELVFDHKMERKWDAAVQSLGFDPLMLSSEAGHA.

Belongs to the UPF0301 (AlgH) family.

The chain is UPF0301 protein Jann_3896 from Jannaschia sp. (strain CCS1).